A 200-amino-acid chain; its full sequence is MSNETNKAQDNQIDEQVESIVEGELLTEGSDEASLMDELTQANFRVEELEKALQEAQSTVDSQKDSVIRAAAEVDNIRRRAAIDVEKARKFALEKFANELLPVLDNMERALQGTDAEAEATKAIYEGVELTAKSFVSAVEKFGLTQVDPQGEAFNPELHQAIGMQPSTDFAANTVMMVMQKGYTLNERLLRPAMVMVSQG.

Belongs to the GrpE family. As to quaternary structure, homodimer.

Its subcellular location is the cytoplasm. Participates actively in the response to hyperosmotic and heat shock by preventing the aggregation of stress-denatured proteins, in association with DnaK and GrpE. It is the nucleotide exchange factor for DnaK and may function as a thermosensor. Unfolded proteins bind initially to DnaJ; upon interaction with the DnaJ-bound protein, DnaK hydrolyzes its bound ATP, resulting in the formation of a stable complex. GrpE releases ADP from DnaK; ATP binding to DnaK triggers the release of the substrate protein, thus completing the reaction cycle. Several rounds of ATP-dependent interactions between DnaJ, DnaK and GrpE are required for fully efficient folding. The protein is Protein GrpE of Shewanella piezotolerans (strain WP3 / JCM 13877).